The sequence spans 215 residues: LysM and putative peptidoglycan-binding domain-containing protein 2 (215 aa).

The interval 1–40 (MADSSPAPSLRAGGPREPRPSAPSPPPPHSRLGSEAEEAE) is disordered. N-acetylalanine is present on Ala-2. Phosphoserine is present on residues Ser-5, Ser-24, Ser-34, and Ser-58. Residues 20–29 (PSAPSPPPPH) show a composition bias toward pro residues. Residues 72–116 (VEHRVRAGDTLQGIALKYGVSMEQIKRANKLFTNDCIFLKKTLNI) enclose the LysM domain. Positions 194–215 (AKKLKGESRDEEGLYTASLYHS) are disordered.

The sequence is that of LysM and putative peptidoglycan-binding domain-containing protein 2 (LYSMD2) from Bos taurus (Bovine).